The chain runs to 368 residues: N-acetylneuraminate epimerase (368 aa).

The first 19 residues, M1–A19, serve as a signal peptide directing secretion. Kelch repeat units lie at residues T40–D84, N86–N137, K139–A173, Y174–G219, T222–G265, E287–N336, and L338–Q367. E228 (proton acceptor) is an active-site residue.

It belongs to the NanM family. In terms of assembly, homodimer.

Its subcellular location is the periplasm. It catalyses the reaction N-acetyl-alpha-neuraminate = N-acetyl-beta-neuraminate. In terms of biological role, converts alpha-N-acetylneuranimic acid (Neu5Ac) to the beta-anomer, accelerating the equilibrium between the alpha- and beta-anomers. Probably facilitates sialidase-negative bacteria to compete successfully for limited amounts of extracellular Neu5Ac, which is likely taken up in the beta-anomer. In addition, the rapid removal of sialic acid from solution might be advantageous to the bacterium to damp down host responses. The polypeptide is N-acetylneuraminate epimerase (Escherichia coli O139:H28 (strain E24377A / ETEC)).